Reading from the N-terminus, the 679-residue chain is Single-strand DNA endonuclease ASTE1 (679 aa).

The tract at residues 351-400 (TILPTQVENMQQPNAHRISQPIRQIIYGLLLNASPHLDKTSWNALPPQPL) is interaction with SHLD2. The segment at 625 to 645 (RSNSKKKRQKKQNTSCSKNRG) is disordered. A compositionally biased stretch (basic residues) spans 626-635 (SNSKKKRQKK).

The protein belongs to the asteroid family. In terms of assembly, interacts with SHLD1, SHLD2, SHLD3, RIF1 and MAD2L2/REV7.

Functionally, structure-specific DNA endonuclease that specifically cleaves single-stranded DNA and 3' overhang DNA. Contributes to the control of DNA double-strand break repair choice by antagonizing BRCA1-dependent homologous recombination (HR) and promoting non-homologous end-joining (NHEJ). Recruited to the single-stranded DNA ends by SHLD2 and cleaves the 3' exposed DNA ends, therefore inhibiting DNA end resection (necessary for HR) and promoting DNA end protection (necessary for NHEJ). The polypeptide is Single-strand DNA endonuclease ASTE1 (ASTE1) (Homo sapiens (Human)).